Here is a 275-residue protein sequence, read N- to C-terminus: Elongation factor Ts (275 aa).

The segment at 76–79 is involved in Mg(2+) ion dislocation from EF-Tu; sequence TDFV.

This sequence belongs to the EF-Ts family.

It is found in the cytoplasm. Functionally, associates with the EF-Tu.GDP complex and induces the exchange of GDP to GTP. It remains bound to the aminoacyl-tRNA.EF-Tu.GTP complex up to the GTP hydrolysis stage on the ribosome. In Salinispora tropica (strain ATCC BAA-916 / DSM 44818 / JCM 13857 / NBRC 105044 / CNB-440), this protein is Elongation factor Ts.